We begin with the raw amino-acid sequence, 189 residues long: Interferon alpha-F (189 aa).

The signal sequence occupies residues methionine 1–glycine 23. 2 disulfide bridges follow: cysteine 24–cysteine 122 and cysteine 52–cysteine 162.

It belongs to the alpha/beta interferon family.

The protein localises to the secreted. In terms of biological role, produced by macrophages, IFN-alpha have antiviral activities. Interferon stimulates the production of two enzymes: a protein kinase and an oligoadenylate synthetase. The sequence is that of Interferon alpha-F (IFNAF) from Bos taurus (Bovine).